The chain runs to 1633 residues: D-lysergyl-peptide-synthetase subunit 3 (1633 aa).

The interval 80–483 (FRQRCDLHPD…GRKDSQIKIR (404 aa)) is adenylation (A) domain. In terms of domain architecture, Carrier spans 622–691 (EEHRLQRMYS…RLKDLARKAS (70 aa)). Residue Ser654 is modified to O-(pantetheine 4'-phosphoryl)serine. Positions 836-1127 (PLVRMKLVEG…ILGQIHGKEA (292 aa)) are condensation (C) domain. Residues 1256–1483 (VTGASGFIGT…EYNSSAGSEW (228 aa)) form a reductase (R) domain region.

This sequence belongs to the NRP synthetase family.

The protein operates within alkaloid biosynthesis; ergot alkaloid biosynthesis. Functionally, D-lysergyl-peptide-synthetase subunit 3; part of the gene cluster that mediates the biosynthesis of fungal ergot alkaloid. DmaW catalyzes the first step of ergot alkaloid biosynthesis by condensing dimethylallyl diphosphate (DMAP) and tryptophan to form 4-dimethylallyl-L-tryptophan. The second step is catalyzed by the methyltransferase easF that methylates 4-dimethylallyl-L-tryptophan in the presence of S-adenosyl-L-methionine, resulting in the formation of 4-dimethylallyl-L-abrine. The catalase easC and the FAD-dependent oxidoreductase easE then transform 4-dimethylallyl-L-abrine to chanoclavine-I which is further oxidized by easD in the presence of NAD(+), resulting in the formation of chanoclavine-I aldehyde. Agroclavine dehydrogenase easG then mediates the conversion of chanoclavine-I aldehyde to agroclavine via a non-enzymatic adduct reaction: the substrate is an iminium intermediate that is formed spontaneously from chanoclavine-I aldehyde in the presence of glutathione. The presence of easA is not required to complete this reaction. Further conversion of agroclavine to paspalic acid is a two-step process involving oxidation of agroclavine to elymoclavine and of elymoclavine to paspalic acid, the second step being performed by the elymoclavine oxidase cloA. Paspalic acid is then further converted to D-lysergic acid. Ergopeptines are assembled from D-lysergic acid and three different amino acids by the D-lysergyl-peptide-synthetases composed each of a monomudular and a trimodular nonribosomal peptide synthetase subunit. LpsB and lpsC encode the monomodular subunits responsible for D-lysergic acid activation and incorporation into the ergopeptine backbone. LpsA1 and A2 subunits encode the trimodular nonribosomal peptide synthetase assembling the tripeptide portion of ergopeptines. LpsA1 is responsible for formation of the major ergopeptine, ergotamine, and lpsA2 for alpha-ergocryptine, the minor ergopeptine of the total alkaloid mixture elaborated by C.purpurea. D-lysergyl-tripeptides are assembled by the nonribosomal peptide synthetases and released as N-(D-lysergyl-aminoacyl)-lactams. Cyclolization of the D-lysergyl-tripeptides is performed by the Fe(2+)/2-ketoglutarate-dependent dioxygenase easH which introduces a hydroxyl group into N-(D-lysergyl-aminoacyl)-lactam at alpha-C of the aminoacyl residue followed by spontaneous condensation with the terminal lactam carbonyl group. This Claviceps purpurea (Ergot fungus) protein is D-lysergyl-peptide-synthetase subunit 3.